The sequence spans 316 residues: 4-hydroxy-3-methylbut-2-enyl diphosphate reductase (316 aa).

Cys-12 is a binding site for [4Fe-4S] cluster. Positions 41 and 74 each coordinate (2E)-4-hydroxy-3-methylbut-2-enyl diphosphate. His-41 and His-74 together coordinate dimethylallyl diphosphate. Residues His-41 and His-74 each contribute to the isopentenyl diphosphate site. A [4Fe-4S] cluster-binding site is contributed by Cys-96. Position 124 (His-124) interacts with (2E)-4-hydroxy-3-methylbut-2-enyl diphosphate. His-124 is a binding site for dimethylallyl diphosphate. His-124 lines the isopentenyl diphosphate pocket. Residue Glu-126 is the Proton donor of the active site. Thr-168 provides a ligand contact to (2E)-4-hydroxy-3-methylbut-2-enyl diphosphate. A [4Fe-4S] cluster-binding site is contributed by Cys-198. (2E)-4-hydroxy-3-methylbut-2-enyl diphosphate-binding residues include Ser-226, Ser-227, Asn-228, and Ser-270. The dimethylallyl diphosphate site is built by Ser-226, Ser-227, Asn-228, and Ser-270. Isopentenyl diphosphate contacts are provided by Ser-226, Ser-227, Asn-228, and Ser-270.

This sequence belongs to the IspH family. It depends on [4Fe-4S] cluster as a cofactor.

It carries out the reaction isopentenyl diphosphate + 2 oxidized [2Fe-2S]-[ferredoxin] + H2O = (2E)-4-hydroxy-3-methylbut-2-enyl diphosphate + 2 reduced [2Fe-2S]-[ferredoxin] + 2 H(+). The enzyme catalyses dimethylallyl diphosphate + 2 oxidized [2Fe-2S]-[ferredoxin] + H2O = (2E)-4-hydroxy-3-methylbut-2-enyl diphosphate + 2 reduced [2Fe-2S]-[ferredoxin] + 2 H(+). It functions in the pathway isoprenoid biosynthesis; dimethylallyl diphosphate biosynthesis; dimethylallyl diphosphate from (2E)-4-hydroxy-3-methylbutenyl diphosphate: step 1/1. It participates in isoprenoid biosynthesis; isopentenyl diphosphate biosynthesis via DXP pathway; isopentenyl diphosphate from 1-deoxy-D-xylulose 5-phosphate: step 6/6. Functionally, catalyzes the conversion of 1-hydroxy-2-methyl-2-(E)-butenyl 4-diphosphate (HMBPP) into a mixture of isopentenyl diphosphate (IPP) and dimethylallyl diphosphate (DMAPP). Acts in the terminal step of the DOXP/MEP pathway for isoprenoid precursor biosynthesis. In Marinobacter nauticus (strain ATCC 700491 / DSM 11845 / VT8) (Marinobacter aquaeolei), this protein is 4-hydroxy-3-methylbut-2-enyl diphosphate reductase.